A 379-amino-acid chain; its full sequence is PqqA peptide cyclase (379 aa).

The Radical SAM core domain occupies 8–220 (LPAPIGLLAE…IRVVEEARER (213 aa)). [4Fe-4S] cluster is bound by residues C22, C26, and C29.

The protein belongs to the radical SAM superfamily. PqqE family. In terms of assembly, interacts with PqqD. The interaction is necessary for activity of PqqE. It depends on [4Fe-4S] cluster as a cofactor.

The enzyme catalyses [PQQ precursor protein] + S-adenosyl-L-methionine = E-Y cross-linked-[PQQ precursor protein] + 5'-deoxyadenosine + L-methionine + H(+). It functions in the pathway cofactor biosynthesis; pyrroloquinoline quinone biosynthesis. In terms of biological role, catalyzes the cross-linking of a glutamate residue and a tyrosine residue in the PqqA protein as part of the biosynthesis of pyrroloquinoline quinone (PQQ). This Methylobacterium nodulans (strain LMG 21967 / CNCM I-2342 / ORS 2060) protein is PqqA peptide cyclase.